We begin with the raw amino-acid sequence, 189 residues long: GTPase NRas (189 aa).

10–17 (GAGGVGKS) is a GTP binding site. An Effector region motif is present at residues 32–40 (YDPTIEDSY). Residues 57–61 (DTAGQ) and 116–119 (NKCD) each bind GTP. Residues 166–185 (YRMKKLNSNEDGNQGCMGLS) form a hypervariable region region. The S-palmitoyl cysteine moiety is linked to residue cysteine 181. Residue cysteine 186 is the site of S-farnesyl cysteine attachment. Residues 187 to 189 (IVM) constitute a propeptide, removed in mature form.

It belongs to the small GTPase superfamily. Ras family. Post-translationally, palmitoylated by the ZDHHC9-GOLGA7 complex. Depalmitoylated by ABHD17A, ABHD17B and ABHD17C. A continuous cycle of de- and re-palmitoylation regulates rapid exchange between plasma membrane and Golgi.

The protein localises to the cell membrane. Its subcellular location is the golgi apparatus membrane. It catalyses the reaction GTP + H2O = GDP + phosphate + H(+). With respect to regulation, alternates between an inactive form bound to GDP and an active form bound to GTP. Activated by a guanine nucleotide-exchange factor (GEF) and inactivated by a GTPase-activating protein (GAP). In terms of biological role, ras proteins bind GDP/GTP and possess intrinsic GTPase activity. In Gallus gallus (Chicken), this protein is GTPase NRas (NRAS).